The following is an 89-amino-acid chain: Small ribosomal subunit protein uS15 (89 aa).

This sequence belongs to the universal ribosomal protein uS15 family. As to quaternary structure, part of the 30S ribosomal subunit. Forms a bridge to the 50S subunit in the 70S ribosome, contacting the 23S rRNA.

One of the primary rRNA binding proteins, it binds directly to 16S rRNA where it helps nucleate assembly of the platform of the 30S subunit by binding and bridging several RNA helices of the 16S rRNA. In terms of biological role, forms an intersubunit bridge (bridge B4) with the 23S rRNA of the 50S subunit in the ribosome. The protein is Small ribosomal subunit protein uS15 of Mycolicibacterium smegmatis (strain ATCC 700084 / mc(2)155) (Mycobacterium smegmatis).